A 183-amino-acid polypeptide reads, in one-letter code: Small ribosomal subunit protein uS4c (183 aa).

Residues 82–143 (MRLDNILFRL…KQRSKALIQN (62 aa)) form the S4 RNA-binding domain.

This sequence belongs to the universal ribosomal protein uS4 family. As to quaternary structure, part of the 30S ribosomal subunit. Contacts protein S5. The interaction surface between S4 and S5 is involved in control of translational fidelity.

The protein resides in the plastid. It is found in the chloroplast. Functionally, one of the primary rRNA binding proteins, it binds directly to 16S rRNA where it nucleates assembly of the body of the 30S subunit. In terms of biological role, with S5 and S12 plays an important role in translational accuracy. This is Small ribosomal subunit protein uS4c (rps4) from Aristea capitata.